A 263-amino-acid polypeptide reads, in one-letter code: 3-deoxy-manno-octulosonate cytidylyltransferase 1 (263 aa).

It belongs to the KdsB family.

The protein resides in the cytoplasm. The catalysed reaction is 3-deoxy-alpha-D-manno-oct-2-ulosonate + CTP = CMP-3-deoxy-beta-D-manno-octulosonate + diphosphate. It functions in the pathway nucleotide-sugar biosynthesis; CMP-3-deoxy-D-manno-octulosonate biosynthesis; CMP-3-deoxy-D-manno-octulosonate from 3-deoxy-D-manno-octulosonate and CTP: step 1/1. Its pathway is bacterial outer membrane biogenesis; lipopolysaccharide biosynthesis. Functionally, activates KDO (a required 8-carbon sugar) for incorporation into bacterial lipopolysaccharide in Gram-negative bacteria. This is 3-deoxy-manno-octulosonate cytidylyltransferase 1 from Burkholderia ambifaria (strain ATCC BAA-244 / DSM 16087 / CCUG 44356 / LMG 19182 / AMMD) (Burkholderia cepacia (strain AMMD)).